A 158-amino-acid chain; its full sequence is NAD(P)H-quinone oxidoreductase subunit N (158 aa).

This sequence belongs to the complex I NdhN subunit family. In terms of assembly, NDH-1 can be composed of about 15 different subunits; different subcomplexes with different compositions have been identified which probably have different functions.

It is found in the cellular thylakoid membrane. It catalyses the reaction a plastoquinone + NADH + (n+1) H(+)(in) = a plastoquinol + NAD(+) + n H(+)(out). The enzyme catalyses a plastoquinone + NADPH + (n+1) H(+)(in) = a plastoquinol + NADP(+) + n H(+)(out). Functionally, NDH-1 shuttles electrons from an unknown electron donor, via FMN and iron-sulfur (Fe-S) centers, to quinones in the respiratory and/or the photosynthetic chain. The immediate electron acceptor for the enzyme in this species is believed to be plastoquinone. Couples the redox reaction to proton translocation, and thus conserves the redox energy in a proton gradient. Cyanobacterial NDH-1 also plays a role in inorganic carbon-concentration. The protein is NAD(P)H-quinone oxidoreductase subunit N of Crocosphaera subtropica (strain ATCC 51142 / BH68) (Cyanothece sp. (strain ATCC 51142)).